The primary structure comprises 656 residues: Pheromone-processing carboxypeptidase KEX1 (656 aa).

An N-terminal signal peptide occupies residues M1–G17. Over A18–R536 the chain is Lumenal. N-linked (GlcNAc...) asparagine glycosylation is found at N61 and N118. Catalysis depends on residues S180 and D388. N434 and N442 each carry an N-linked (GlcNAc...) asparagine glycan. Residue H445 is part of the active site. Residues A537–Y557 traverse the membrane as a helical segment. Topologically, residues K558–K656 are cytoplasmic. Residues M626–K656 form a disordered region.

It belongs to the peptidase S10 family.

The protein resides in the golgi apparatus. It is found in the trans-Golgi network membrane. The catalysed reaction is Preferential release of a C-terminal arginine or lysine residue.. Its function is as follows. Protease with a carboxypeptidase B-like function involved in the C-terminal processing of the lysine and arginine residues from protein precursors. Promotes cell fusion and is involved in the programmed cell death. This chain is Pheromone-processing carboxypeptidase KEX1 (KEX1), found in Meyerozyma guilliermondii (strain ATCC 6260 / CBS 566 / DSM 6381 / JCM 1539 / NBRC 10279 / NRRL Y-324) (Yeast).